A 160-amino-acid chain; its full sequence is Transcriptional repressor NrdR (160 aa).

Positions 1–11 (MRCPSCSSLDT) are enriched in polar residues. The interval 1-20 (MRCPSCSSLDTQVKDSRPTE) is disordered. A zinc finger lies at 3 to 34 (CPSCSSLDTQVKDSRPTEDSSVIRRRRVCLAC). The ATP-cone domain occupies 49-139 (LTVIKRNGRR…VYRNFREAKD (91 aa)).

The protein belongs to the NrdR family. Requires Zn(2+) as cofactor.

In terms of biological role, negatively regulates transcription of bacterial ribonucleotide reductase nrd genes and operons by binding to NrdR-boxes. In Rhodopseudomonas palustris (strain BisA53), this protein is Transcriptional repressor NrdR.